A 314-amino-acid chain; its full sequence is Probable RuBisCO transcriptional regulator (314 aa).

The HTH lysR-type domain occupies 6–63 (FTLDQLKIIKTIHREGSFKTAAKKLYISQPAVSRQVQNLERQLNTPIFYRDKRKARLT). Residues 23 to 42 (FKTAAKKLYISQPAVSRQVQ) constitute a DNA-binding region (H-T-H motif).

This sequence belongs to the LysR transcriptional regulatory family.

The protein resides in the plastid. It localises to the chloroplast. Its function is as follows. Trans-acting transcriptional regulator of RuBisCO genes (rbcL and rbcS) expression. The protein is Probable RuBisCO transcriptional regulator (rbcR) of Emiliania huxleyi (Coccolithophore).